The following is a 788-amino-acid chain: Diacylglycerol kinase gamma (788 aa).

The span at 83 to 93 shows a compositional bias: basic and acidic residues; it reads PRQETPDHPKE. The interval 83–150 is disordered; it reads PRQETPDHPK…WGEPNAPASS (68 aa). A compositionally biased stretch (polar residues) spans 95–109; the sequence is ASSSEPNVSDSNAES. EF-hand domains follow at residues 172-207 and 217-252; these read RPQDKLEFMFRLYDSDENELLDQAELDQIVSQMLHV and ELRPILKEMLQGMDYNKDGFVSLEEWVSGGMTTIPL. Asp185, Asp187, Asn189, Glu196, Asp230, Asn232, Asp234, and Glu241 together coordinate Ca(2+). 2 consecutive Phorbol-ester/DAG-type zinc fingers follow at residues 268-318 and 333-380; these read RHAW…IPGC and QHAW…STAC. In terms of domain architecture, DAGKc spans 427 to 561; it reads PGTHPLLVLV…LDRWYLEVMP (135 aa). A disordered region spans residues 768 to 788; it reads MMGPPQKSSFFSLRRKSRSKD.

Belongs to the eukaryotic diacylglycerol kinase family. Expressed specifically in brain. Highly expressed in cerebellar Purkinje cells (at protein level).

It localises to the membrane. Its subcellular location is the cytoplasm. The protein resides in the cytosol. The protein localises to the cytoskeleton. It carries out the reaction a 1,2-diacyl-sn-glycerol + ATP = a 1,2-diacyl-sn-glycero-3-phosphate + ADP + H(+). It catalyses the reaction 1,2-didecanoyl-sn-glycerol + ATP = 1,2-didecanoyl-sn-glycero-3-phosphate + ADP + H(+). The enzyme catalyses 1,2-di-(9Z-octadecenoyl)-sn-glycerol + ATP = 1,2-di-(9Z-octadecenoyl)-sn-glycero-3-phosphate + ADP + H(+). The catalysed reaction is 1-octadecanoyl-2-(9Z,12Z)-octadecadienoyl-sn-glycerol + ATP = 1-octadecanoyl-2-(9Z,12Z-octadecadienoyl)-sn-glycero-3-phosphate + ADP + H(+). It carries out the reaction 1-octadecanoyl-2-(5Z,8Z,11Z,14Z-eicosatetraenoyl)-sn-glycerol + ATP = 1-octadecanoyl-2-(5Z,8Z,11Z,14Z-eicosatetraenoyl)-sn-glycero-3-phosphate + ADP + H(+). The protein operates within lipid metabolism; glycerolipid metabolism. The activity is calcium-dependent. Requires phosphatidylserine for maximal activity. Functionally, diacylglycerol kinase that converts diacylglycerol/DAG into phosphatidic acid/phosphatidate/PA and regulates the respective levels of these two bioactive lipids. Thereby, acts as a central switch between the signaling pathways activated by these second messengers with different cellular targets and opposite effects in numerous biological processes. Has no apparent specificity with regard to the acyl compositions of diacylglycerol. Specifically expressed in the cerebellum where it controls the level of diacylglycerol which in turn regulates the activity of protein kinase C gamma. Through protein kinase C gamma, indirectly regulates the dendritic development of Purkinje cells, cerebellar long term depression and ultimately cerebellar motor coordination. This is Diacylglycerol kinase gamma (Dgkg) from Rattus norvegicus (Rat).